The sequence spans 351 residues: UPF0104 membrane protein MTH_887 (351 aa).

The next 8 membrane-spanning stretches (helical) occupy residues 20-40 (IVLS…FAGF), 51-71 (SPYF…LWTL), 137-157 (VFEF…IMTW), 165-185 (IVVS…VYAG), 244-264 (FVIG…RLYV), 275-295 (AVPL…PILP), 304-324 (ILVG…AASV), and 328-348 (IASY…YGKQ).

The protein belongs to the UPF0104 family.

It is found in the cell membrane. The polypeptide is UPF0104 membrane protein MTH_887 (Methanothermobacter thermautotrophicus (strain ATCC 29096 / DSM 1053 / JCM 10044 / NBRC 100330 / Delta H) (Methanobacterium thermoautotrophicum)).